The following is a 529-amino-acid chain: Basal body-orientation factor 1 (529 aa).

Over residues 1–13 (MPSKGKDKKKGKS) the composition is skewed to basic residues. Residues 1–22 (MPSKGKDKKKGKSKGKDTKKLI) are disordered. 2 coiled-coil regions span residues 85 to 201 (LKKQ…EAEK) and 271 to 361 (VKEK…EVER).

This sequence belongs to the BBOF1 family. As to quaternary structure, interacts with MNS1 and ODF2.

It is found in the cytoplasm. The protein resides in the cytoskeleton. The protein localises to the cilium basal body. Its subcellular location is the flagellum axoneme. Plays an essential role in sperm motility and male fertility by stabilizing the sperm flagellar axonemal structure. May be required for the stability of ODF2 and MANS1 proteins. Dispensable for the assembly and function of motile cilia. The chain is Basal body-orientation factor 1 from Homo sapiens (Human).